The chain runs to 451 residues: Cindoxin reductase (451 aa).

Positions 24, 45, 53, and 89 each coordinate FAD. NADP(+) contacts are provided by residues 157-160 (NGNV) and 197-198 (RS). FAD-binding positions include tryptophan 338 and 345-347 (GGI). NADP(+) is bound at residue glycine 345.

The protein belongs to the ferredoxin--NADP reductase type 1 family. FAD is required as a cofactor.

In terms of biological role, involved in the degradation of cineol (eucalyptol). Catalyzes the reduction of cindoxin (CinC). This is Cindoxin reductase (cinB) from Citrobacter braakii.